Here is an 82-residue protein sequence, read N- to C-terminus: Sulfur carrier protein TusA (82 aa).

Catalysis depends on Cys-20, which acts as the Cysteine persulfide intermediate.

It belongs to the sulfur carrier protein TusA family.

The protein localises to the cytoplasm. Its function is as follows. Sulfur carrier protein which probably makes part of a sulfur-relay system. The sequence is that of Sulfur carrier protein TusA from Aeromonas hydrophila subsp. hydrophila (strain ATCC 7966 / DSM 30187 / BCRC 13018 / CCUG 14551 / JCM 1027 / KCTC 2358 / NCIMB 9240 / NCTC 8049).